We begin with the raw amino-acid sequence, 168 residues long: G/U mismatch-specific DNA glycosylase (168 aa).

This sequence belongs to the uracil-DNA glycosylase (UDG) superfamily. TDG/mug family. In terms of assembly, binds DNA as a monomer.

Its subcellular location is the cytoplasm. It catalyses the reaction Specifically hydrolyzes mismatched double-stranded DNA and polynucleotides, releasing free uracil.. Its function is as follows. Excises ethenocytosine and uracil, which can arise by alkylation or deamination of cytosine, respectively, from the corresponding mispairs with guanine in ds-DNA. It is capable of hydrolyzing the carbon-nitrogen bond between the sugar-phosphate backbone of the DNA and the mispaired base. The complementary strand guanine functions in substrate recognition. Required for DNA damage lesion repair in stationary-phase cells. In Salmonella dublin (strain CT_02021853), this protein is G/U mismatch-specific DNA glycosylase.